The chain runs to 215 residues: uncharacterized protein (215 aa).

This is an uncharacterized protein from Haemophilus influenzae (strain ATCC 51907 / DSM 11121 / KW20 / Rd).